Consider the following 916-residue polypeptide: DNA ligase 1 (916 aa).

The span at 1–10 shows a compositional bias: polar residues; the sequence is MQRSIMSFFQ. The interval 1-197 is disordered; sequence MQRSIMSFFQ…SPESVTLTKT (197 aa). A compositionally biased stretch (basic and acidic residues) spans 13-43; it reads KEGKAKKPEKETPSSIREKEPPPKVALKERN. 3 positions are modified to phosphoserine: S49, S51, and S65. T77 carries the post-translational modification Phosphothreonine. Residues 99-111 are compositionally biased toward polar residues; sequence PENSPVFNCSSPM. Over residues 119 to 129 the composition is skewed to basic residues; it reads PKRRTARKQLP. N6-acetyllysine is present on K144. Over residues 153-177 the composition is skewed to basic and acidic residues; it reads KEEETPKESLAEAEDIKQKEEKEGD. A compositionally biased stretch (polar residues) spans 185 to 197; the sequence is PTKSPESVTLTKT. A Phosphothreonine modification is found at T193. At K225 the chain carries N6-acetyllysine. Phosphoserine occurs at positions 228 and 229. T232 is subject to Phosphothreonine. Residues 236-266 are disordered; it reads PAVKTEVKQEESGTLRKEETKGTLDPANYNP. Positions 238–257 are enriched in basic and acidic residues; sequence VKTEVKQEESGTLRKEETKG. The interval 447–456 is interaction with target DNA; the sequence is RLRLGLAEQS. ATP is bound at residue E564. K566 serves as the catalytic N6-AMP-lysine intermediate. ATP is bound by residues R571 and E619. E619 lines the Mg(2+) pocket. The segment at 640–642 is interaction with target DNA; the sequence is KRK. E718 lines the Mg(2+) pocket. Positions 723 and 742 each coordinate ATP. Position 796 is a phosphothreonine (T796). A phosphoserine mark is found at S799, S906, S907, and S911. A disordered region spans residues 879–916; that stretch reads DKQPEQATTSNQVASLYRKQSQIQNQQSSDLDSDVEDY. Positions 883–908 are enriched in polar residues; it reads EQATTSNQVASLYRKQSQIQNQQSSD.

It belongs to the ATP-dependent DNA ligase family. In terms of assembly, interacts with PCNA. Interacts with POLB. Mg(2+) is required as a cofactor.

Its subcellular location is the nucleus. The catalysed reaction is ATP + (deoxyribonucleotide)n-3'-hydroxyl + 5'-phospho-(deoxyribonucleotide)m = (deoxyribonucleotide)n+m + AMP + diphosphate.. In terms of biological role, DNA ligase that seals nicks in double-stranded during DNA repair. Also involved in DNA replication and DNA recombination. The sequence is that of DNA ligase 1 (Lig1) from Mus musculus (Mouse).